Consider the following 420-residue polypeptide: Histidine--tRNA ligase (420 aa).

This sequence belongs to the class-II aminoacyl-tRNA synthetase family. Homodimer.

Its subcellular location is the cytoplasm. The catalysed reaction is tRNA(His) + L-histidine + ATP = L-histidyl-tRNA(His) + AMP + diphosphate + H(+). This Staphylococcus aureus (strain Mu3 / ATCC 700698) protein is Histidine--tRNA ligase.